We begin with the raw amino-acid sequence, 322 residues long: D-alanine--D-alanine ligase (322 aa).

The ATP-grasp domain maps to 110–310; that stretch reads KAVLAAAGIP…FDRLVFWIVE (201 aa). 137–191 lines the ATP pocket; that stretch reads MPPPYVVKPNAEGSSVGVSLVFEGANGPPRQLAAPDWAFGEQVMVEPYIPGLELA. Mg(2+) contacts are provided by D263, E277, and N279.

The protein belongs to the D-alanine--D-alanine ligase family. Mg(2+) is required as a cofactor. The cofactor is Mn(2+).

The protein localises to the cytoplasm. It catalyses the reaction 2 D-alanine + ATP = D-alanyl-D-alanine + ADP + phosphate + H(+). Its pathway is cell wall biogenesis; peptidoglycan biosynthesis. Its function is as follows. Cell wall formation. The chain is D-alanine--D-alanine ligase from Caulobacter sp. (strain K31).